The primary structure comprises 67 residues: MRKQLEEARKLSPVELEKLVREKKRELMELRFQASIGQLSQNHKIRDLKRQIARLLTVLNEKRRQNA.

It belongs to the universal ribosomal protein uL29 family.

This chain is Large ribosomal subunit protein uL29 (rpmC), found in Thermus thermophilus.